A 436-amino-acid polypeptide reads, in one-letter code: MFESKINPLWQSFILAVQEEVKPALGCTEPISLALAAAAAAAELDGTVERIDAWVSPNLMKNGMGVTVPGTGMVGLPIAAALGVLGGDAKAGLEVLKDASAKAVADAKAMLAAGHVAVMLQEPCNDILFSRAKVYSGDSWACVTIVGDHTNIVRIETDKGVVFTQADNAQEEEKTSPLGVLSHTSLEEILAFVNAVPFDAIRFILDAARLNGALSQEGLRGSWGLHIGSTLAKQCDRGLLAKDLSTAILIRTSAASDARMGGATLPAMSNSGSGNQGITATVPVMVVAEHVGADDERLARALMLSHLSAIYIHHQLPRLSALCAATTAAMGAAAGMAWLIDGRYDTIAMAISSMIGDVSGMICDGASNSCAMKVSTSASAAWKALLMALDDTAVTGNEGIVAHNVEQSIANLCSLACRSMQQTDKQIIEIMASKAH.

Belongs to the UPF0597 family.

The protein is UPF0597 protein YhaM of Salmonella choleraesuis (strain SC-B67).